A 1362-amino-acid polypeptide reads, in one-letter code: ATP-dependent RNA helicase dhx29 (1362 aa).

The span at 1–10 (MGGKNKKNRH) shows a compositional bias: basic residues. A disordered region spans residues 1–76 (MGGKNKKNRH…FASSSDSGVS (76 aa)). The span at 18–27 (GATAAANRPR) shows a compositional bias: low complexity. Residues 28 to 41 (AAAEPRPGGEDAAK) show a composition bias toward basic and acidic residues. Positions 66-76 (SFASSSDSGVS) are enriched in low complexity. Positions 89-109 (EAKLEKRIISLINEHKKLNSN) form a coiled coil. Disordered stretches follow at residues 182–215 (QRAR…LKGN) and 229–257 (EQGS…DPNE). Residues 231–242 (GSDDDDDDDDVK) are compositionally biased toward acidic residues. The segment covering 243–257 (EEEKETTLEKFDPNE) has biased composition (basic and acidic residues). Positions 285-305 (QKEAQERIRGYQQEMKSLEDH) form a coiled coil. The interval 317-336 (VKSESKQPKPALPPSEDEPL) is disordered. The 174-residue stretch at 576–749 (LETLKRHRVI…FTHCPIIRIS (174 aa)) folds into the Helicase ATP-binding domain. 589–596 (GETGSGKS) is an ATP binding site. Residues 696–699 (DEVH) carry the DEAH box motif. The region spanning 852–1021 (DISPEYRNVE…ELCLHIMKCD (170 aa)) is the Helicase C-terminal domain.

This sequence belongs to the DEAD box helicase family. DEAH subfamily. Part of the 43S pre-initiation complex (PIC).

Its subcellular location is the cytoplasm. It carries out the reaction ATP + H2O = ADP + phosphate + H(+). ATP-binding RNA helicase involved in translation initiation. Part of the 43S pre-initiation complex that is required for efficient initiation on mRNAs of higher eukaryotes with structured 5'-UTRs by promoting efficient NTPase-dependent 48S complex formation. Specifically binds to the 40S ribosome near the mRNA entrance. Does not possess a processive helicase activity. This chain is ATP-dependent RNA helicase dhx29, found in Xenopus laevis (African clawed frog).